Consider the following 845-residue polypeptide: Prickle-like protein 2 (845 aa).

The PET domain maps to 18–126 (FDFQRSSTSD…NVRPFPVTMT (109 aa)). Phosphoserine is present on S92. 3 LIM zinc-binding domains span residues 128 to 193 (AICE…CLKP), 193 to 253 (PRCA…LYAE), and 253 to 317 (EYCD…EDPN). 2 disordered regions span residues 314–346 (EDPNGSDSSDSAFQNARAKESRRSAKIGKNKGK) and 483–546 (YSDM…GSME). Over residues 318–327 (GSDSSDSAFQ) the composition is skewed to polar residues. S319, S321, and S322 each carry phosphoserine. A phosphothreonine mark is found at T535, T537, and T540. A phosphoserine mark is found at S544 and S547. The segment at 558–581 (AEGGAKRQEHLSRFSMPDLSKDSG) is disordered. A phosphoserine mark is found at S608 and S643. The disordered stretch occupies residues 642–700 (QSFDFDGGIASSKLPGQEGVHIQPMSERTRRRTTSRDDNRRFRPHRSRRSRRSRSDNAL). Positions 683 to 693 (FRPHRSRRSRR) are enriched in basic residues. S732 is modified (phosphoserine). Residues 823 to 845 (STLGGRGQLHSRKRQKSKNCIIS) are disordered. C842 is subject to Cysteine methyl ester. C842 carries the S-farnesyl cysteine lipid modification. The propeptide at 843–845 (IIS) is removed in mature form.

The protein belongs to the prickle / espinas / testin family. Expressed in the hippocampus and cerebral cortex.

It localises to the nucleus membrane. This is Prickle-like protein 2 (Prickle2) from Mus musculus (Mouse).